The sequence spans 199 residues: ATP-dependent Clp protease proteolytic subunit (199 aa).

Ser-98 acts as the Nucleophile in catalysis. The active site involves His-123.

It belongs to the peptidase S14 family. In terms of assembly, fourteen ClpP subunits assemble into 2 heptameric rings which stack back to back to give a disk-like structure with a central cavity, resembling the structure of eukaryotic proteasomes.

The protein resides in the cytoplasm. It carries out the reaction Hydrolysis of proteins to small peptides in the presence of ATP and magnesium. alpha-casein is the usual test substrate. In the absence of ATP, only oligopeptides shorter than five residues are hydrolyzed (such as succinyl-Leu-Tyr-|-NHMec, and Leu-Tyr-Leu-|-Tyr-Trp, in which cleavage of the -Tyr-|-Leu- and -Tyr-|-Trp bonds also occurs).. Cleaves peptides in various proteins in a process that requires ATP hydrolysis. Has a chymotrypsin-like activity. Plays a major role in the degradation of misfolded proteins. The chain is ATP-dependent Clp protease proteolytic subunit from Clostridium botulinum (strain Alaska E43 / Type E3).